Reading from the N-terminus, the 968-residue chain is MPFALGQRWISDTESELGLGTVVQVEGRMVTVLFPATGENRMFSRNEAPLTRVIYNPGDTVESHEGWSLSVEELTEKDGLVVYHGIHSETGEKVSLRETLLNHNIRFNKPQDRLFAGQIDRLDRFGIRYQCQLLRHQLATSDLLGLQGPRVGLIPHQMWIAHEVGRRYAPRVLLADEVGLGKTIEAGLIIHQQLLTGRAERVLIIVPDTLRHQWLVEMLRRFNLRFSVFDEDRCVEAFADHDNPFYTEQLVICSLELLRKKKRLDQALDADWDLLVVDEAHHLEWTEEAPSRAYQVVEALSEVVPGVLLLTATPDQLGHESHFARLRLLDPDRFYDYDAFLAEENSYKDVAVAAEALAGDAKLSDAAINSLTELLSEKDIAPSIRLIQAEDIDSELQQAARSELLQELLDRHGTGRVLYRNSRASVKGFPKRIFNAYPHAMPEQYLTAARVNEMMGGRKSLEAQAAQALSPEKLYQEFEDNSASWWKFDPRVDWLIEFLKSHRSKKVLIIASGADTALSLEEALRTREGIQATVFHEGMSIIERDKAGAYFAQEEGGAQALICSEIGSEGRNFQFASHLVLFDLPLNPDLLEQRIGRLDRIGQKNDIQIHLPYLQDTAQERLLNWYHQGLNAFELTCPSGHVLYSEFAEDLLNVLVGGDEDELTNLLNHTQSRYKELKHAMEQGRDKLLEINSHGGDKAKAIVERLAQSDQDTKLIGSVIRLWDIIGVDQEDKGENSIILRPSEHMMFPTYPGLHEDGVTVTFDRDTALSRDDIALITQEHPLVQTGLDLITGSDTGTTSVAILKNKALPAGTLFLELIYMADASAPKSSQLYRYLPPTPIRVLLDKNGNDLSAKVDYTSFDKQLSAVNRHIGSKLVTASQPILHPLFAKGEEYAQTAVNELVAQAREKMTSQLTGELDRLESLKAVNPNIREEELEYLRNQMQELSTYLDASQLQLDAIRMVLVSHV.

The region spanning 163 to 332 is the Helicase ATP-binding domain; sequence EVGRRYAPRV…FARLRLLDPD (170 aa). 176–183 is an ATP binding site; sequence DEVGLGKT. Positions 278-281 match the DEAH box motif; the sequence is DEAH. Residues 491 to 655 enclose the Helicase C-terminal domain; that stretch reads RVDWLIEFLK…EFAEDLLNVL (165 aa).

This sequence belongs to the SNF2/RAD54 helicase family. RapA subfamily. As to quaternary structure, interacts with the RNAP. Has a higher affinity for the core RNAP than for the holoenzyme. Its ATPase activity is stimulated by binding to RNAP.

Its function is as follows. Transcription regulator that activates transcription by stimulating RNA polymerase (RNAP) recycling in case of stress conditions such as supercoiled DNA or high salt concentrations. Probably acts by releasing the RNAP, when it is trapped or immobilized on tightly supercoiled DNA. Does not activate transcription on linear DNA. Probably not involved in DNA repair. The polypeptide is RNA polymerase-associated protein RapA (Shewanella sp. (strain ANA-3)).